Reading from the N-terminus, the 223-residue chain is Guanylate kinase (223 aa).

The Guanylate kinase-like domain occupies 6–183; sequence GRLFVMTGAS…AVADFLAILT (178 aa). 13–20 serves as a coordination point for ATP; it reads GASGVGKG.

It belongs to the guanylate kinase family.

The protein resides in the cytoplasm. The enzyme catalyses GMP + ATP = GDP + ADP. Essential for recycling GMP and indirectly, cGMP. The polypeptide is Guanylate kinase (Thermus thermophilus (strain ATCC 27634 / DSM 579 / HB8)).